Consider the following 399-residue polypeptide: Elongation factor Tu (399 aa).

One can recognise a tr-type G domain in the interval 10–204; sequence KPHVNIGTIG…AVDANIPEPE (195 aa). Residues 19–26 are G1; sequence GHVDHGKT. GTP is bound at residue 19-26; that stretch reads GHVDHGKT. Thr-26 contacts Mg(2+). A G2 region spans residues 60–64; that stretch reads GITIN. A G3 region spans residues 81–84; that stretch reads DCPG. GTP is bound by residues 81 to 85 and 136 to 139; these read DCPGH and NKCD. The segment at 136-139 is G4; that stretch reads NKCD. A G5 region spans residues 174–176; sequence SGL.

It belongs to the TRAFAC class translation factor GTPase superfamily. Classic translation factor GTPase family. EF-Tu/EF-1A subfamily. As to quaternary structure, monomer.

Its subcellular location is the cytoplasm. It catalyses the reaction GTP + H2O = GDP + phosphate + H(+). Its function is as follows. GTP hydrolase that promotes the GTP-dependent binding of aminoacyl-tRNA to the A-site of ribosomes during protein biosynthesis. The chain is Elongation factor Tu from Synechococcus sp. (strain WH7803).